The sequence spans 265 residues: 3-deoxy-manno-octulosonate cytidylyltransferase 2 (265 aa).

This sequence belongs to the KdsB family.

The protein localises to the cytoplasm. It catalyses the reaction 3-deoxy-alpha-D-manno-oct-2-ulosonate + CTP = CMP-3-deoxy-beta-D-manno-octulosonate + diphosphate. It functions in the pathway nucleotide-sugar biosynthesis; CMP-3-deoxy-D-manno-octulosonate biosynthesis; CMP-3-deoxy-D-manno-octulosonate from 3-deoxy-D-manno-octulosonate and CTP: step 1/1. Its pathway is bacterial outer membrane biogenesis; lipopolysaccharide biosynthesis. Activates KDO (a required 8-carbon sugar) for incorporation into bacterial lipopolysaccharide in Gram-negative bacteria. The sequence is that of 3-deoxy-manno-octulosonate cytidylyltransferase 2 from Burkholderia lata (strain ATCC 17760 / DSM 23089 / LMG 22485 / NCIMB 9086 / R18194 / 383).